Reading from the N-terminus, the 106-residue chain is UPF0145 protein Daci_3728 (106 aa).

Belongs to the UPF0145 family.

This Delftia acidovorans (strain DSM 14801 / SPH-1) protein is UPF0145 protein Daci_3728.